The sequence spans 372 residues: uncharacterized protein (372 aa).

A signal peptide spans 1–19; sequence MKIFFLFIILLGIIQLSNS. N-linked (GlcNAc...) asparagine glycosylation is present at Asn-18. The MRH domain occupies 20 to 160; it reads SSCNIDIAGD…IWTTKYSCAI (141 aa). Cys-22 and Cys-58 are disulfide-bonded. An N-linked (GlcNAc...) asparagine glycan is attached at Asn-59. Cys-128 and Cys-158 form a disulfide bridge. Residues 185 to 282 adopt a coiled-coil conformation; sequence NEILNEAQSN…VQFNDDIKLI (98 aa). The disordered stretch occupies residues 201–233; that stretch reads KNEDLNNNNNNNNNNNNNNNNNNNNNNNNNKIN. A compositionally biased stretch (low complexity) spans 206-230; the sequence is NNNNNNNNNNNNNNNNNNNNNNNNN.

Its subcellular location is the secreted. This is an uncharacterized protein from Dictyostelium discoideum (Social amoeba).